Here is a 529-residue protein sequence, read N- to C-terminus: Phenylalanine N-monooxygenase (529 aa).

The chain crosses the membrane as a helical span at residues 1-21 (MLDSTPMLAFIIGLLLLALTM). Cys467 contacts heme.

This sequence belongs to the cytochrome P450 family. Heme serves as cofactor.

It localises to the endoplasmic reticulum membrane. It catalyses the reaction L-phenylalanine + 2 reduced [NADPH--hemoprotein reductase] + 2 O2 = (E)-phenylacetaldehyde oxime + 2 oxidized [NADPH--hemoprotein reductase] + CO2 + 3 H2O + 2 H(+). It functions in the pathway secondary metabolite biosynthesis; phenylglucosinolate biosynthesis. Its function is as follows. Converts L-phenylalanine into phenylacetaldoxime, the precursor of benzylglucosinolate (glucotropeolin). The chain is Phenylalanine N-monooxygenase (CYP79A2) from Arabidopsis thaliana (Mouse-ear cress).